The sequence spans 358 residues: MTINVKQKLGDLDLDMNVDLPMQGITSIFGRSGAGKTSLINILSGLTRPDEGYISLGKRVLYDSTNDVFLPPEKRRIGYVFQDARLFPHYTVMGNLHYGCDHKDPQHFNDIVTLLGIEHLLNRYPSSLSGGEKQRVAIGRALLIKPDMLLMDEPLASLDLPRKQELMPYLEMLAKEVNTPIVYVTHSLDEILRLADHMVMINQGKVVVSGNVNSVWGSLEMRPWLPAKEQSSLLTARVNLNHPKYALTQVMLSHNAYLWVSRVNQERGEWIRVRIHSNDVSLTRVKPEQTSIRNVLLARIDKIHIIEDDQKVEIKLRVGETHLWANITLWAADELALKVGDEVYAQIKGVSVTKDDLA.

Residues 3–228 form the ABC transporter domain; the sequence is INVKQKLGDL…LEMRPWLPAK (226 aa). 30 to 37 provides a ligand contact to ATP; it reads GRSGAGKT. One can recognise a Mop domain in the interval 289–356; that stretch reads QTSIRNVLLA…IKGVSVTKDD (68 aa).

This sequence belongs to the ABC transporter superfamily. Molybdate importer (TC 3.A.1.8) family. The complex is composed of two ATP-binding proteins (ModC), two transmembrane proteins (ModB) and a solute-binding protein (ModA).

It is found in the cell inner membrane. The enzyme catalyses molybdate(out) + ATP + H2O = molybdate(in) + ADP + phosphate + H(+). Part of the ABC transporter complex ModABC involved in molybdenum import. Responsible for energy coupling to the transport system. The chain is Molybdenum import ATP-binding protein ModC from Photobacterium profundum (strain SS9).